We begin with the raw amino-acid sequence, 177 residues long: Non-specific lipid transfer protein GPI-anchored 22 (177 aa).

The signal sequence occupies residues 1-29; sequence MARFMAYNQNPQMLALCITVAVMFLGVRS. 4 disulfides stabilise this stretch: C38–C81, C48–C63, C64–C108, and C79–C117. N113 is a glycosylation site (N-linked (GlcNAc...) asparagine). Residue S152 is the site of GPI-anchor amidated serine attachment. Residues 153 to 177 constitute a propeptide, removed in mature form; the sequence is SSIKGRDNKQFGLMMAGALSIWYIM.

It belongs to the plant LTP family. As to expression, expressed in seedlings, preferentially in hypocotyls and roots. Also observed in siliques.

The protein localises to the cell membrane. Its function is as follows. Probable lipid transfer protein. This chain is Non-specific lipid transfer protein GPI-anchored 22, found in Arabidopsis thaliana (Mouse-ear cress).